The primary structure comprises 412 residues: Flap endonuclease 1-B (412 aa).

Residues 1-105 (MGIKGLTKLL…KELAKRSLKR (105 aa)) form an N-domain region. Position 34 (aspartate 34) interacts with Mg(2+). DNA is bound at residue arginine 71. Residues aspartate 87, glutamate 159, glutamate 161, aspartate 180, and aspartate 182 each coordinate Mg(2+). An I-domain region spans residues 123–254 (LIEKFSKRTV…QRALKLIRQH (132 aa)). Glutamate 159 serves as a coordination point for DNA. DNA is bound by residues glycine 232 and aspartate 234. Aspartate 234 serves as a coordination point for Mg(2+).

This sequence belongs to the XPG/RAD2 endonuclease family. FEN1 subfamily. In terms of assembly, interacts with PCNA. Three molecules of FEN1 bind to one PCNA trimer with each molecule binding to one PCNA monomer. PCNA stimulates the nuclease activity without altering cleavage specificity. Mg(2+) is required as a cofactor. Post-translationally, phosphorylated. Phosphorylation upon DNA damage induces relocalization to the nuclear plasma.

It is found in the nucleus. It localises to the nucleolus. The protein localises to the nucleoplasm. Its subcellular location is the mitochondrion. Structure-specific nuclease with 5'-flap endonuclease and 5'-3' exonuclease activities involved in DNA replication and repair. During DNA replication, cleaves the 5'-overhanging flap structure that is generated by displacement synthesis when DNA polymerase encounters the 5'-end of a downstream Okazaki fragment. It enters the flap from the 5'-end and then tracks to cleave the flap base, leaving a nick for ligation. Also involved in the long patch base excision repair (LP-BER) pathway, by cleaving within the apurinic/apyrimidinic (AP) site-terminated flap. Acts as a genome stabilization factor that prevents flaps from equilibrating into structures that lead to duplications and deletions. Also possesses 5'-3' exonuclease activity on nicked or gapped double-stranded DNA, and exhibits RNase H activity. Also involved in replication and repair of rDNA and in repairing mitochondrial DNA. The polypeptide is Flap endonuclease 1-B (Oryza sativa subsp. indica (Rice)).